A 233-amino-acid chain; its full sequence is Large ribosomal subunit protein uL1 (233 aa).

This sequence belongs to the universal ribosomal protein uL1 family. Part of the 50S ribosomal subunit.

Its function is as follows. Binds directly to 23S rRNA. The L1 stalk is quite mobile in the ribosome, and is involved in E site tRNA release. Protein L1 is also a translational repressor protein, it controls the translation of the L11 operon by binding to its mRNA. The sequence is that of Large ribosomal subunit protein uL1 from Shewanella denitrificans (strain OS217 / ATCC BAA-1090 / DSM 15013).